Reading from the N-terminus, the 482-residue chain is G patch domain-containing protein 2-like (482 aa).

Phosphoserine is present on residues Ser-31, Ser-86, and Ser-88. At Thr-91 the chain carries Phosphothreonine. A Glycyl lysine isopeptide (Lys-Gly) (interchain with G-Cter in SUMO2) cross-link involves residue Lys-196. The segment covering 198–214 (GRKERMECETDEQKQGS) has biased composition (basic and acidic residues). 2 disordered regions span residues 198–247 (GRKE…DDEQ) and 413–482 (KRKR…PGYS). Residues 220 to 230 (ECETSSVCSSS) show a composition bias toward low complexity. Polar residues predominate over residues 439–450 (TPASQAPKSPSS). Ser-447 and Ser-449 each carry phosphoserine. Low complexity predominate over residues 456-469 (TSAAEKATDATTAT).

The sequence is that of G patch domain-containing protein 2-like (GPATCH2L) from Homo sapiens (Human).